A 518-amino-acid polypeptide reads, in one-letter code: ATP synthase subunit alpha (518 aa).

169–176 (GDRQTGKT) contributes to the ATP binding site.

This sequence belongs to the ATPase alpha/beta chains family. As to quaternary structure, F-type ATPases have 2 components, CF(1) - the catalytic core - and CF(0) - the membrane proton channel. CF(1) has five subunits: alpha(3), beta(3), gamma(1), delta(1), epsilon(1). CF(0) has three main subunits: a(1), b(2) and c(9-12). The alpha and beta chains form an alternating ring which encloses part of the gamma chain. CF(1) is attached to CF(0) by a central stalk formed by the gamma and epsilon chains, while a peripheral stalk is formed by the delta and b chains.

Its subcellular location is the cell membrane. The enzyme catalyses ATP + H2O + 4 H(+)(in) = ADP + phosphate + 5 H(+)(out). Functionally, produces ATP from ADP in the presence of a proton gradient across the membrane. The alpha chain is a regulatory subunit. The polypeptide is ATP synthase subunit alpha (Mycoplasma genitalium (strain ATCC 33530 / DSM 19775 / NCTC 10195 / G37) (Mycoplasmoides genitalium)).